The following is a 616-amino-acid chain: Chaperone protein HscA (616 aa).

The protein belongs to the heat shock protein 70 family.

Chaperone involved in the maturation of iron-sulfur cluster-containing proteins. Has a low intrinsic ATPase activity which is markedly stimulated by HscB. Involved in the maturation of IscU. The polypeptide is Chaperone protein HscA (Salmonella typhimurium (strain LT2 / SGSC1412 / ATCC 700720)).